We begin with the raw amino-acid sequence, 435 residues long: Nuclear distribution protein nudF 2 (435 aa).

The region spanning 9–41 (QAEELHKSIIAYLSANGLPETTAILRKELGVTE) is the LisH domain. WD repeat units lie at residues 86–125 (SHRDTINCIAFHPKYSSIASGSDDCTIKIWDWELGELEVT), 128–171 (GHTR…KNIR), 175–214 (GHDHIVSAVRFIPNGSLLASASRDMDVRLWDVTNGYCVKT), 217–256 (GHTGWVRDVCASLDGRFILSTGDDMTVRLWDISAKPENKL), 280–320 (APLA…LMTL), 322–361 (GHDNWVRAIVFHPGGRYLLSVSDDKTLRCWDLSQEGKCVK), 366–396 (THGGFITCLRWAPAILKDTPTDAARALVRQI), and 397–434 (PDVAEIMKNATFEESFSDVQIRCVVATGSVDKKLQIFA).

This sequence belongs to the WD repeat LIS1/nudF family. Self-associates. Interacts with nudE and dynein.

The protein resides in the cytoplasm. It is found in the cytoskeleton. Its subcellular location is the spindle pole. Its function is as follows. Positively regulates the activity of the minus-end directed microtubule motor protein dynein. May enhance dynein-mediated microtubule sliding by targeting dynein to the microtubule plus end. Required for nuclear migration during vegetative growth as well as development. Required for retrograde early endosome (EE) transport from the hyphal tip. Required for localization of dynein to the mitotic spindle poles. Recruits additional proteins to the dynein complex at SPBs. This Aspergillus clavatus (strain ATCC 1007 / CBS 513.65 / DSM 816 / NCTC 3887 / NRRL 1 / QM 1276 / 107) protein is Nuclear distribution protein nudF 2.